The following is a 76-amino-acid chain: Omega-conotoxin-like TxO5 (76 aa).

Residues 1-22 (MKLTCMVIVAVLFLTAWTFVTA) form the signal peptide. A propeptide spanning residues 23-50 (ITSNGLENLFPNAHHEMKNPEASKLNKR) is cleaved from the precursor. 3 disulfides stabilise this stretch: C51/C66, C58/C70, and C65/C75.

This sequence belongs to the conotoxin O1 superfamily. As to expression, expressed by the venom duct.

The protein resides in the secreted. Omega-conotoxins act at presynaptic membranes, they bind and block voltage-gated calcium channels (Cav). The polypeptide is Omega-conotoxin-like TxO5 (TXO5) (Conus textile (Cloth-of-gold cone)).